Consider the following 153-residue polypeptide: 6,7-dimethyl-8-ribityllumazine synthase (153 aa).

5-amino-6-(D-ribitylamino)uracil is bound by residues F22, 56 to 58 (AFE), and 80 to 82 (AVI). A (2S)-2-hydroxy-3-oxobutyl phosphate-binding site is contributed by 85 to 86 (ST). H88 acts as the Proton donor in catalysis. Residue F113 participates in 5-amino-6-(D-ribitylamino)uracil binding. Residue R127 participates in (2S)-2-hydroxy-3-oxobutyl phosphate binding.

It belongs to the DMRL synthase family.

It catalyses the reaction (2S)-2-hydroxy-3-oxobutyl phosphate + 5-amino-6-(D-ribitylamino)uracil = 6,7-dimethyl-8-(1-D-ribityl)lumazine + phosphate + 2 H2O + H(+). The protein operates within cofactor biosynthesis; riboflavin biosynthesis; riboflavin from 2-hydroxy-3-oxobutyl phosphate and 5-amino-6-(D-ribitylamino)uracil: step 1/2. Functionally, catalyzes the formation of 6,7-dimethyl-8-ribityllumazine by condensation of 5-amino-6-(D-ribitylamino)uracil with 3,4-dihydroxy-2-butanone 4-phosphate. This is the penultimate step in the biosynthesis of riboflavin. In Fusobacterium nucleatum subsp. nucleatum (strain ATCC 25586 / DSM 15643 / BCRC 10681 / CIP 101130 / JCM 8532 / KCTC 2640 / LMG 13131 / VPI 4355), this protein is 6,7-dimethyl-8-ribityllumazine synthase.